The sequence spans 578 residues: L-ascorbate oxidase (578 aa).

The N-terminal stretch at 1 to 28 is a signal peptide; the sequence is MASLGFLFFFLLPLILLELSSSRSVMAA. Plastocyanin-like domains lie at 30-149 and 161-328; these read TRHF…LIVE and DGEF…NYLP. The Cu cation site is built by His-87, His-89, His-131, and His-133. 2 disulfides stabilise this stretch: Cys-108–Cys-565 and Cys-207–Cys-221. The N-linked (GlcNAc...) asparagine glycan is linked to Asn-206. 4 N-linked (GlcNAc...) asparagine glycosylation sites follow: Asn-349, Asn-394, Asn-438, and Asn-451. The Plastocyanin-like 3 domain occupies 372–550; it reads HRRIILLNTQ…HMGMGVIFAE (179 aa). Positions 472, 475, 477, 533, 534, 535, 539, and 544 each coordinate Cu cation.

Belongs to the multicopper oxidase family. In terms of assembly, dimer. Cu cation serves as cofactor. Highly expressed in young and growing tissues.

The protein resides in the secreted. The catalysed reaction is 4 L-ascorbate + O2 = 4 monodehydro-L-ascorbate radical + 2 H2O. In terms of biological role, may be involved in a redox system involving ascorbic acid. The protein is L-ascorbate oxidase (AAO) of Nicotiana tabacum (Common tobacco).